Here is a 150-residue protein sequence, read N- to C-terminus: MIRILGEGKGSNLLEDVKEKLEEIVKKEIGDVHVNVILVSEDEIKELNQQFRSHDQPTDVLTFLLMEEDVYGEIYVCPMIVEENAKEFSNTFEKELLEVVIHGILHLAGYDHEFEDRKSKEMFEKQKKYVEEVWGEWRSDPSEDSGPGKR.

Residues histidine 102, histidine 106, and histidine 112 each contribute to the Zn(2+) site.

This sequence belongs to the endoribonuclease YbeY family. Zn(2+) is required as a cofactor.

Its subcellular location is the cytoplasm. Functionally, single strand-specific metallo-endoribonuclease involved in late-stage 70S ribosome quality control and in maturation of the 3' terminus of the 16S rRNA. This is Endoribonuclease YbeY from Thermotoga petrophila (strain ATCC BAA-488 / DSM 13995 / JCM 10881 / RKU-1).